The primary structure comprises 530 residues: Autoinducer-2 kinase (530 aa).

Belongs to the FGGY kinase family.

The protein resides in the cytoplasm. The catalysed reaction is (S)-4,5-dihydroxypentane-2,3-dione + ATP = (2S)-2-hydroxy-3,4-dioxopentyl phosphate + ADP + H(+). Its function is as follows. Catalyzes the phosphorylation of autoinducer-2 (AI-2) to phospho-AI-2, which subsequently inactivates the transcriptional regulator LsrR and leads to the transcription of the lsr operon. Phosphorylates the ring-open form of (S)-4,5-dihydroxypentane-2,3-dione (DPD), which is the precursor to all AI-2 signaling molecules, at the C5 position. The chain is Autoinducer-2 kinase from Escherichia coli O9:H4 (strain HS).